Here is a 273-residue protein sequence, read N- to C-terminus: Ribosomal RNA small subunit methyltransferase A (273 aa).

Positions 18, 20, 45, 66, 91, and 113 each coordinate S-adenosyl-L-methionine.

It belongs to the class I-like SAM-binding methyltransferase superfamily. rRNA adenine N(6)-methyltransferase family. RsmA subfamily.

The protein localises to the cytoplasm. The enzyme catalyses adenosine(1518)/adenosine(1519) in 16S rRNA + 4 S-adenosyl-L-methionine = N(6)-dimethyladenosine(1518)/N(6)-dimethyladenosine(1519) in 16S rRNA + 4 S-adenosyl-L-homocysteine + 4 H(+). Specifically dimethylates two adjacent adenosines (A1518 and A1519) in the loop of a conserved hairpin near the 3'-end of 16S rRNA in the 30S particle. May play a critical role in biogenesis of 30S subunits. The polypeptide is Ribosomal RNA small subunit methyltransferase A (Klebsiella pneumoniae subsp. pneumoniae (strain ATCC 700721 / MGH 78578)).